Consider the following 596-residue polypeptide: Beta-fructofuranosidase, insoluble isoenzyme 6 (596 aa).

The N-terminal stretch at 1 to 25 is a signal peptide; that stretch reads MALAGLPLSVFAIAVHFCLVFSSSS. Residues 49–52, glutamine 68, and tryptophan 76 each bind substrate; that span reads WQND. Residue aspartate 52 is part of the active site. Asparagine 80 carries N-linked (GlcNAc...) asparagine glycosylation. Substrate contacts are provided by residues 113-114, 177-178, and glutamate 232; these read AS and RD. A glycan (N-linked (GlcNAc...) asparagine) is linked at asparagine 335. An intrachain disulfide couples cysteine 436 to cysteine 482. An N-linked (GlcNAc...) asparagine glycan is attached at asparagine 556.

Belongs to the glycosyl hydrolase 32 family. Expressed in roots. Weakly expressed in flowers.

The protein localises to the secreted. It is found in the extracellular space. Its subcellular location is the apoplast. It localises to the cell wall. It carries out the reaction Hydrolysis of terminal non-reducing beta-D-fructofuranoside residues in beta-D-fructofuranosides.. This Oryza sativa subsp. japonica (Rice) protein is Beta-fructofuranosidase, insoluble isoenzyme 6 (CIN6).